Reading from the N-terminus, the 491-residue chain is Chromosomal replication initiator protein DnaA (491 aa).

A domain I, interacts with DnaA modulators region spans residues 1-69 (MTTWNKCLKK…TIQEFHDGDL (69 aa)). The segment at 69–154 (LLIEYSNKKF…KDDQEYSFGL (86 aa)) is domain II. A disordered region spans residues 106 to 126 (DSEETSLNQEPKKSQKKLSSK). A domain III, AAA+ region region spans residues 155–371 (PLKEKYVFDS…GALNRVLTTS (217 aa)). Residues Gly199, Gly201, Lys202, and Thr203 each coordinate ATP. The interval 372-491 (KFNHKDPTIE…YELLLDKISR (120 aa)) is domain IV, binds dsDNA.

This sequence belongs to the DnaA family. Oligomerizes as a right-handed, spiral filament on DNA at oriC.

It is found in the cytoplasm. Its function is as follows. Plays an essential role in the initiation and regulation of chromosomal replication. ATP-DnaA binds to the origin of replication (oriC) to initiate formation of the DNA replication initiation complex once per cell cycle. Binds the DnaA box (a 9 base pair repeat at the origin) and separates the double-stranded (ds)DNA. Forms a right-handed helical filament on oriC DNA; dsDNA binds to the exterior of the filament while single-stranded (ss)DNA is stabiized in the filament's interior. The ATP-DnaA-oriC complex binds and stabilizes one strand of the AT-rich DNA unwinding element (DUE), permitting loading of DNA polymerase. After initiation quickly degrades to an ADP-DnaA complex that is not apt for DNA replication. Binds acidic phospholipids. The polypeptide is Chromosomal replication initiator protein DnaA (Francisella philomiragia subsp. philomiragia (strain ATCC 25017 / CCUG 19701 / FSC 153 / O#319-036)).